Here is a 141-residue protein sequence, read N- to C-terminus: Large ribosomal subunit protein uL11 (141 aa).

It belongs to the universal ribosomal protein uL11 family. As to quaternary structure, part of the ribosomal stalk of the 50S ribosomal subunit. Interacts with L10 and the large rRNA to form the base of the stalk. L10 forms an elongated spine to which L12 dimers bind in a sequential fashion forming a multimeric L10(L12)X complex. One or more lysine residues are methylated.

Functionally, forms part of the ribosomal stalk which helps the ribosome interact with GTP-bound translation factors. The sequence is that of Large ribosomal subunit protein uL11 from Selenomonas ruminantium.